A 516-amino-acid chain; its full sequence is Zinc finger protein 83 (516 aa).

Positions 1–20 are disordered; the sequence is MHGRKDDAQKQPVKNQLGLN. A C2H2-type 1; degenerate zinc finger spans residues 93–115; it reads YKCSERGKAFHQGLHFTIHQIIH. C2H2-type zinc fingers lie at residues 121–143, 149–171, 177–199, 205–227, 233–255, 261–283, 289–311, 317–339, 345–367, 373–395, 401–423, 429–451, 457–479, and 485–507; these read FKCD…QRIH, YKCN…RRIH, YKCN…QRIH, YKCN…RTIH, YECN…LIIH, YRCN…QRIH, YKCN…WRIH, YKCN…LIIH, YKCD…HRIH, YKCD…WRIH, YKCN…RKIH, FKCN…HAIH, and FKCN…QRFH.

The protein belongs to the krueppel C2H2-type zinc-finger protein family.

It is found in the nucleus. Its function is as follows. May be involved in transcriptional regulation. The protein is Zinc finger protein 83 (ZNF83) of Homo sapiens (Human).